The following is a 248-amino-acid chain: Protein-lysine N-methyltransferase EFM5 (248 aa).

Belongs to the class I-like SAM-binding methyltransferase superfamily. EFM5 family.

The protein localises to the cytoplasm. In terms of biological role, S-adenosyl-L-methionine-dependent protein-lysine N-methyltransferase that trimethylates elongation factor 1-alpha (TEF1 and TEF2) at 'Lys-79'. Required for replication of Brome mosaic virus (BMV). The chain is Protein-lysine N-methyltransferase EFM5 from Saccharomyces cerevisiae (strain ATCC 204508 / S288c) (Baker's yeast).